A 188-amino-acid polypeptide reads, in one-letter code: Thymidine kinase (188 aa).

Residue 17 to 24 (GPMFAGKT) coordinates ATP. Glu-92 (proton acceptor) is an active-site residue. Phe-121 contacts substrate. Residues Cys-146 and Cys-149 each coordinate Zn(2+). Position 166 to 170 (166 to 170 (LILAG)) interacts with substrate. The Zn(2+) site is built by Cys-179 and Cys-182.

The protein belongs to the thymidine kinase family.

It carries out the reaction thymidine + ATP = dTMP + ADP + H(+). Phosphorylates thymidine. ASFV replicates in the cytoplasm of infected cells and contains genes encoding a number of enzymes needed for DNA synthesis, including thymidine kinase. Important for growth in swine macrophages in vitro and is a virus virulence factor in swine. The polypeptide is Thymidine kinase (Ornithodoros (relapsing fever ticks)).